Here is a 165-residue protein sequence, read N- to C-terminus: Endoribonuclease YbeY (165 aa).

3 residues coordinate Zn(2+): histidine 130, histidine 134, and histidine 140.

The protein belongs to the endoribonuclease YbeY family. Requires Zn(2+) as cofactor.

The protein localises to the cytoplasm. In terms of biological role, single strand-specific metallo-endoribonuclease involved in late-stage 70S ribosome quality control and in maturation of the 3' terminus of the 16S rRNA. The chain is Endoribonuclease YbeY from Streptococcus agalactiae serotype Ia (strain ATCC 27591 / A909 / CDC SS700).